Consider the following 149-residue polypeptide: 3-dehydroquinate dehydratase (149 aa).

Residue Tyr-22 is the Proton acceptor of the active site. Asn-74, His-80, and Asp-87 together coordinate substrate. Residue His-100 is the Proton donor of the active site. Substrate is bound by residues 101-102 and Arg-111; that span reads LS.

Belongs to the type-II 3-dehydroquinase family. As to quaternary structure, homododecamer.

It catalyses the reaction 3-dehydroquinate = 3-dehydroshikimate + H2O. The protein operates within metabolic intermediate biosynthesis; chorismate biosynthesis; chorismate from D-erythrose 4-phosphate and phosphoenolpyruvate: step 3/7. Catalyzes a trans-dehydration via an enolate intermediate. This Vesicomyosocius okutanii subsp. Calyptogena okutanii (strain HA) protein is 3-dehydroquinate dehydratase.